A 139-amino-acid chain; its full sequence is Metallothiol transferase FosB (139 aa).

Residues Gly4 to Gly119 enclose the VOC domain. Mg(2+)-binding residues include His7, His66, and Glu115. Catalysis depends on Glu115, which acts as the Proton donor/acceptor.

It belongs to the fosfomycin resistance protein family. FosB subfamily. In terms of assembly, homodimer. Mg(2+) serves as cofactor.

It localises to the cytoplasm. In terms of biological role, metallothiol transferase which confers resistance to fosfomycin by catalyzing the addition of a thiol cofactor to fosfomycin. L-cysteine is probably the physiological thiol donor. The sequence is that of Metallothiol transferase FosB from Staphylococcus haemolyticus.